We begin with the raw amino-acid sequence, 667 residues long: Alpha-1,4-glucan:maltose-1-phosphate maltosyltransferase (667 aa).

Positions 261, 321, and 356 each coordinate alpha-maltose 1-phosphate. Asp392 serves as the catalytic Nucleophile. Asn393 is an alpha-maltose 1-phosphate binding site. Glu421 acts as the Proton donor in catalysis. 534–535 provides a ligand contact to alpha-maltose 1-phosphate; it reads KY.

The protein belongs to the glycosyl hydrolase 13 family. GlgE subfamily. Homodimer.

The catalysed reaction is alpha-maltose 1-phosphate + [(1-&gt;4)-alpha-D-glucosyl](n) = [(1-&gt;4)-alpha-D-glucosyl](n+2) + phosphate. Its function is as follows. Maltosyltransferase that uses maltose 1-phosphate (M1P) as the sugar donor to elongate linear or branched alpha-(1-&gt;4)-glucans. Is involved in a branched alpha-glucan biosynthetic pathway from trehalose, together with TreS, Mak and GlgB. This Methylacidiphilum infernorum (isolate V4) (Methylokorus infernorum (strain V4)) protein is Alpha-1,4-glucan:maltose-1-phosphate maltosyltransferase.